Reading from the N-terminus, the 392-residue chain is Cytochrome P450 monooxygenase ppzE (392 aa).

The helical transmembrane segment at 10–30 (LELVWFVALYPFACWTLFAVL) threads the bilayer. A glycan (N-linked (GlcNAc...) asparagine) is linked at N319. C353 is a binding site for heme. N372 carries N-linked (GlcNAc...) asparagine glycosylation.

It belongs to the cytochrome P450 family. It depends on heme as a cofactor.

It localises to the membrane. It participates in secondary metabolite biosynthesis. Cytochrome P450 monooxygenase; part of the gene cluster that mediates the biosynthesis of pyrrolopyrazines, secondary metabolites showing insecticidal activity. The role of ppzE within the pathway has still to be determined. The single multifunctional NRPS ppzA is sufficient to produce peramine via condensation of 1-pyrroline-5-carboxylate and arginine, N-methylation of the alpha-amino group of arginine and reduction of the thioester and the cyclization to form an iminium ion resulting in release from the peptide synthetase. Deprotonation of this intermediate and oxidation of the pyrroline ring would give rise to peramine. In Epichloe species that produce only peramine, the peramine synthetase gene is not localized in a gene cluster, in contrast to Metarhizium species that contain additional pyrrolopyrazine biosynthesis genes. The 2-oxoglutarate-Fe(II) type oxidoreductase ppzC hydroxylates peramine to yield the newly identified compound 8-hydroxyperamine whereas ppzD converts L-proline into trans-4-hydroxy-L-proline, a precursor of peramine biosynthesis. The polypeptide is Cytochrome P450 monooxygenase ppzE (Metarhizium rileyi (strain RCEF 4871) (Nomuraea rileyi)).